The sequence spans 251 residues: Hydroxyacylglutathione hydrolase (251 aa).

The Zn(2+) site is built by H53, H55, D57, H58, H110, D127, and H165.

Belongs to the metallo-beta-lactamase superfamily. Glyoxalase II family. In terms of assembly, monomer. Zn(2+) serves as cofactor.

It carries out the reaction an S-(2-hydroxyacyl)glutathione + H2O = a 2-hydroxy carboxylate + glutathione + H(+). The protein operates within secondary metabolite metabolism; methylglyoxal degradation; (R)-lactate from methylglyoxal: step 2/2. Functionally, thiolesterase that catalyzes the hydrolysis of S-D-lactoyl-glutathione to form glutathione and D-lactic acid. The sequence is that of Hydroxyacylglutathione hydrolase from Yersinia pestis (strain Pestoides F).